The chain runs to 1325 residues: Cyclic nucleotide-gated channel beta-1 (1325 aa).

Disordered regions lie at residues 1-124 (MLGW…QVAV), 147-198 (PQPV…SLWL), 227-279 (AVLD…PGDP), 340-470 (WEDA…LDSC), 482-637 (LERT…SQNS), and 659-694 (KEKL…PAEA). Over 1-732 (MLGWVQRVLP…SIDPLTNLMY (732 aa)) the chain is Cytoplasmic. Residues 43–81 (PQQEPEPEPEPEPEPEPEPEPEPEPEPEPEPEPVPEEAP) are compositionally biased toward acidic residues. The span at 105 to 121 (LQETQVADPAQPTSQAQ) shows a compositional bias: polar residues. The segment covering 370-379 (IPRELTKIQE) has biased composition (basic and acidic residues). Composition is skewed to acidic residues over residues 380-393 (ERED…EEKE), 418-463 (EEKE…EEEP), and 495-517 (LPEE…EEKK). Basic and acidic residues predominate over residues 518–527 (EEEVEKKEEG). Residues 560-571 (TLPPPERPPPSP) show a composition bias toward pro residues. Residues 633 to 643 (ASQNSAIINDR) are calmodulin-binding CaM1. The helical transmembrane segment at 733 to 754 (ILWLFFVVLAWNWNCWLIPVRW) threads the bilayer. Topologically, residues 755 to 763 (AFPYQRADN) are extracellular. Residues 764–785 (IHFWLLMDYLCDFIYLLDITVF) form a helical membrane-spanning segment. Residues 786–800 (QMRLQFVKGGDIITD) are Cytoplasmic-facing. Residues 801 to 820 (KKEMRNNYLKSRRFKMDLLC) form a helical membrane-spanning segment. Topologically, residues 821 to 836 (LLPLDFLYLKLGINPL) are extracellular. The chain crosses the membrane as a helical span at residues 837 to 849 (LRLPRCLKYMAFF). The Cytoplasmic segment spans residues 850-861 (EFNNRLEAILSK). Residues 862–884 (AYVYRVIRTTAYLLYSLHLNSCL) traverse the membrane as a helical segment. Residues 862 to 961 (AYVYRVIRTT…IGQMRDVVGA (100 aa)) form an ion conduction pathway region. Residues 885 to 907 (YYWASAFQGIGSTHWVYDGVGNS) are Extracellular-facing. The next 2 helical transmembrane spans lie at 908 to 934 (YIRC…LFEI) and 935 to 960 (VFQL…DVVG). The Cytoplasmic portion of the chain corresponds to 961 to 1325 (AATAGQTYYR…VLEEKKEGAE (365 aa)). Positions 964 to 1040 (AGQTYYRSCM…SIVSKVALFQ (77 aa)) are C-linker. Residues 1038–1142 (LFQGCDRQMI…LDKKDLNEIL (105 aa)) are cNMP-binding domain. The cyclic nucleotide-binding domain stretch occupies residues 1044–1160 (RQMIFDMLKR…LLRKKARRML (117 aa)). G1105, E1106, S1108, R1118, and T1119 together coordinate 3',5'-cyclic GMP. R1118 lines the 3',5'-cyclic AMP pocket. Residues 1224-1230 (QQQLLEQ) are calmodulin-binding CaM2. Positions 1226-1250 (QLLEQAKSSQEAGGEEGSGATDQPA) are enriched in low complexity. A disordered region spans residues 1226–1325 (QLLEQAKSSQ…VLEEKKEGAE (100 aa)). The segment covering 1262–1279 (KPPGPPEPSAQSSPPPAS) has biased composition (pro residues).

This sequence belongs to the cyclic nucleotide-gated cation channel (TC 1.A.1.5) family. CNGB1 subfamily. In terms of tissue distribution, rod outer segments. Olfactory sensory neurons.

It is found in the cell projection. The protein localises to the cilium membrane. The catalysed reaction is Ca(2+)(in) = Ca(2+)(out). It carries out the reaction Na(+)(in) = Na(+)(out). It catalyses the reaction K(+)(in) = K(+)(out). The enzyme catalyses NH4(+)(in) = NH4(+)(out). The catalysed reaction is Rb(+)(in) = Rb(+)(out). It carries out the reaction Li(+)(in) = Li(+)(out). It catalyses the reaction Cs(+)(in) = Cs(+)(out). Its function is as follows. Pore-forming subunit of the rod cyclic nucleotide-gated channel. Mediates rod photoresponses at dim light converting transient changes in intracellular cGMP levels into electrical signals. In the dark, cGMP levels are high and keep the channel open enabling a steady inward current carried by Na(+) and Ca(2+) ions that leads to membrane depolarization and neurotransmitter release from synaptic terminals. Upon photon absorption cGMP levels decline leading to channel closure and membrane hyperpolarization that ultimately slows neurotransmitter release and signals the presence of light, the end point of the phototransduction cascade. Pore-forming subunit of the olfactory cyclic nucleotide-gated channel. Operates in the cilia of olfactory sensory neurons where chemical stimulation of the odorant is converted to an electrical signal. Mediates odorant-induced cAMP-dependent Ca(2+) influx triggering neuron depolarization. The rise of intracellular Ca(2+) levels potentiates the olfactory response by activating Ca(2+)-dependent Cl(-) channels, but it also serves as a negative feedback signal to desensitize the channel for rapid adaptation to odorants. Conducts cGMP- and cAMP-gated ion currents, with permeability for monovalent and divalent cations. The selectivity for Ca(2+) over Na(+) increases with cGMP concentrations, whereas the selectivity among monovalent ions is independent of the cGMP levels. In Mus musculus (Mouse), this protein is Cyclic nucleotide-gated channel beta-1.